Reading from the N-terminus, the 87-residue chain is U9-ctenitoxin-Pn1a (87 aa).

The signal sequence occupies residues 1–22 (MWLKTQLFVLAIAVIALLEVHA). Positions 23–37 (EPESNDNNELVVEEA) are excised as a propeptide. 4 disulfides stabilise this stretch: Cys-40–Cys-54, Cys-47–Cys-64, Cys-53–Cys-73, and Cys-66–Cys-71. Residues 75–87 (KSLREMAAAAFGR) constitute a propeptide that is removed on maturation.

The protein belongs to the neurotoxin 02 (plectoxin) family. 01 (Tx3) subfamily. As to expression, expressed by the venom gland.

It localises to the secreted. Its function is as follows. Antagonist of L-type calcium channels (Cav1/CACNA1). This Phoneutria nigriventer (Brazilian armed spider) protein is U9-ctenitoxin-Pn1a.